The following is a 239-amino-acid chain: ATP synthase subunit a (239 aa).

Helical transmembrane passes span Phe-31–Gly-51, Val-91–Ile-111, Ala-125–Val-145, Phe-151–Ile-171, Ile-194–Phe-214, and Thr-215–Ile-235.

Belongs to the ATPase A chain family. As to quaternary structure, F-type ATPases have 2 components, CF(1) - the catalytic core - and CF(0) - the membrane proton channel. CF(1) has five subunits: alpha(3), beta(3), gamma(1), delta(1), epsilon(1). CF(0) has three main subunits: a(1), b(2) and c(9-12). The alpha and beta chains form an alternating ring which encloses part of the gamma chain. CF(1) is attached to CF(0) by a central stalk formed by the gamma and epsilon chains, while a peripheral stalk is formed by the delta and b chains.

Its subcellular location is the cell inner membrane. In terms of biological role, key component of the proton channel; it plays a direct role in the translocation of protons across the membrane. The protein is ATP synthase subunit a of Syntrophobacter fumaroxidans (strain DSM 10017 / MPOB).